The sequence spans 304 residues: Undecaprenyl-diphosphatase (304 aa).

The next 8 helical transmembrane spans lie at 5 to 25, 47 to 67, 72 to 92, 111 to 131, 137 to 157, 209 to 231, 248 to 268, and 283 to 303; these read FLFI…EFVP, GFPE…VVVL, ISSS…LKTS, FGIN…LFHD, LFST…LIVI, ISGL…AMVG, TNWI…LVVI, and FAIY…TKVI.

The protein belongs to the UppP family.

It is found in the cell membrane. It catalyses the reaction di-trans,octa-cis-undecaprenyl diphosphate + H2O = di-trans,octa-cis-undecaprenyl phosphate + phosphate + H(+). In terms of biological role, catalyzes the dephosphorylation of undecaprenyl diphosphate (UPP). Confers resistance to bacitracin. The protein is Undecaprenyl-diphosphatase of Clostridium perfringens (strain 13 / Type A).